The sequence spans 1377 residues: Protein RhsA (1377 aa).

28 repeat units span residues 330 to 352 (GKQV…HRHT), 353 to 374 (GRPE…LNPA), 375 to 417 (GLSY…EHAD), 418 to 438 (GSVT…TDAA), 439 to 460 (GRTT…TTPD), 461 to 481 (GRAS…TGPD), 482 to 502 (GLEL…TAPD), 503 to 525 (GDIT…EDAT), 526 to 546 (GSRK…TDCS), 547 to 567 (GYVT…HREE), 568 to 588 (GLSQ…KDTQ), 589 to 609 (GHET…IAPD), 610 to 629 (GSRN…TTQG), 630 to 650 (GLTR…TSEN), 651 to 671 (GSHT…TGFD), 672 to 691 (GRTQ…SEDE), 692 to 711 (GLVT…RTVK), 712 to 734 (GETA…HISE), 735 to 758 (GHRV…QTVH), 808 to 828 (GDTP…LRSF), 829 to 850 (GRYE…HLNS), 851 to 871 (LLSD…ISSP), 872 to 894 (RQTR…TAAN), 895 to 930 (LDIR…NRIA), 931 to 959 (RDAH…VIRT), 960 to 984 (DDER…TQYE), 985 to 1019 (EPLV…MSLS), and 1162 to 1186 (GTTE…HQLQ). The 28 X approximate tandem repeats stretch occupies residues 330–1186 (GKQVRSFTYD…LNEENPHQLQ (857 aa)). Positions 1356-1377 (DAKSTQKAWNCRHSRQSNDKKR) are disordered.

Belongs to the RHS family.

Functionally, rhs elements have a nonessential function. They may play an important role in the natural ecology of the cell. The chain is Protein RhsA (rhsA) from Escherichia coli (strain K12).